The following is a 301-amino-acid chain: Probable aspartoacylase (301 aa).

Residues His-13 and Glu-16 each coordinate Zn(2+). Substrate is bound by residues Arg-54 and 61-62; that span reads NR. His-105 serves as a coordination point for Zn(2+). Positions 163 and 273 each coordinate substrate.

It belongs to the AspA/AstE family. Aspartoacylase subfamily. Zn(2+) is required as a cofactor.

The enzyme catalyses an N-acyl-L-aspartate + H2O = a carboxylate + L-aspartate. The chain is Probable aspartoacylase from Prochlorococcus marinus (strain MIT 9301).